The chain runs to 597 residues: Elongation factor 4 (597 aa).

Residues 2 to 184 (QNIRNFSIIA…DIVKKIPAPE (183 aa)) enclose the tr-type G domain. GTP is bound by residues 14–19 (DHGKST) and 131–134 (NKID).

Belongs to the TRAFAC class translation factor GTPase superfamily. Classic translation factor GTPase family. LepA subfamily.

The protein localises to the cell inner membrane. The enzyme catalyses GTP + H2O = GDP + phosphate + H(+). Required for accurate and efficient protein synthesis under certain stress conditions. May act as a fidelity factor of the translation reaction, by catalyzing a one-codon backward translocation of tRNAs on improperly translocated ribosomes. Back-translocation proceeds from a post-translocation (POST) complex to a pre-translocation (PRE) complex, thus giving elongation factor G a second chance to translocate the tRNAs correctly. Binds to ribosomes in a GTP-dependent manner. The sequence is that of Elongation factor 4 from Haemophilus ducreyi (strain 35000HP / ATCC 700724).